The sequence spans 588 residues: Serine/threonine-protein kinase CBK1 (588 aa).

Disordered regions lie at residues 1 to 76 (MTDK…HQQQ) and 100 to 139 (QHQQ…RDRA). Over residues 29-42 (LYQQNSNQSNTSLD) the composition is skewed to polar residues. Low complexity-rich tracts occupy residues 43-76 (QQQQ…HQQQ) and 100-117 (QHQQ…AQQQ). Positions 207–517 (FVTVKVIGKG…ANEIKSHPFF (311 aa)) constitute a Protein kinase domain. ATP contacts are provided by residues 213–221 (IGKGAFGEV) and lysine 236. Residue aspartate 330 is the Proton acceptor of the active site. The interval 370 to 389 (GTSSNPATQMGPPQNTNRQS) is disordered. The AGC-kinase C-terminal domain occupies 518 to 586 (RGVDWSSIRE…SRFDNMTRRN (69 aa)).

This sequence belongs to the protein kinase superfamily. STE Ser/Thr protein kinase family. COT1 subfamily.

The catalysed reaction is L-seryl-[protein] + ATP = O-phospho-L-seryl-[protein] + ADP + H(+). It carries out the reaction L-threonyl-[protein] + ATP = O-phospho-L-threonyl-[protein] + ADP + H(+). In terms of biological role, protein kinase that seems to play a role in the regulation of cell morphogenesis and proliferation. The polypeptide is Serine/threonine-protein kinase CBK1 (CBK1) (Yarrowia lipolytica (strain CLIB 122 / E 150) (Yeast)).